Consider the following 379-residue polypeptide: MAKRDYYEVLGVSRDAEEREIKKAYKRLAMKFHPDRQSEDKNAEEKFKEAKEAYEILTDAQKRAAYDQYGHAAFEQGGMGGGGFGGGGGGADFSDIFGDVFGDIFGGGRRQQRASRGSDLRYNMDLTLEEAVRGVTKEIRIPTLDECDVCHGSGAKPGSSPVTCPTCHGAGQVQMRQGFFTVQQACPHCHGRGQIIKDPCNKCHGHGRVEKSKTLSVKIPAGVDTGDRIRLSGEGEAGEHGAPSGDLYVQVQVKAHPIFEREGNNLYCEVPINFAMAALGGEIEVPTLDGRVKLKIPAETQTGKMFRMRGKGVKSVRGGSQGDLLCRVVVETPVSLSEKQKQLLRELEESFVGAAGEKNSPRAKSFLDGVKKFFDDLTR.

One can recognise a J domain in the interval 5–70 (DYYEVLGVSR…QKRAAYDQYG (66 aa)). The CR-type zinc finger occupies 134-212 (GVTKEIRIPT…CHGHGRVEKS (79 aa)). The Zn(2+) site is built by Cys-147, Cys-150, Cys-164, Cys-167, Cys-186, Cys-189, Cys-200, and Cys-203. CXXCXGXG motif repeat units follow at residues 147–154 (CDVCHGSG), 164–171 (CPTCHGAG), 186–193 (CPHCHGRG), and 200–207 (CNKCHGHG).

It belongs to the DnaJ family. Homodimer. The cofactor is Zn(2+).

It localises to the cytoplasm. In terms of biological role, participates actively in the response to hyperosmotic and heat shock by preventing the aggregation of stress-denatured proteins and by disaggregating proteins, also in an autonomous, DnaK-independent fashion. Unfolded proteins bind initially to DnaJ; upon interaction with the DnaJ-bound protein, DnaK hydrolyzes its bound ATP, resulting in the formation of a stable complex. GrpE releases ADP from DnaK; ATP binding to DnaK triggers the release of the substrate protein, thus completing the reaction cycle. Several rounds of ATP-dependent interactions between DnaJ, DnaK and GrpE are required for fully efficient folding. Also involved, together with DnaK and GrpE, in the DNA replication of plasmids through activation of initiation proteins. The polypeptide is Chaperone protein DnaJ (Yersinia pestis bv. Antiqua (strain Antiqua)).